The chain runs to 309 residues: Elongation factor Ts, mitochondrial (309 aa).

The protein belongs to the EF-Ts family.

It localises to the mitochondrion. Functionally, associates with the EF-Tu.GDP complex and induces the exchange of GDP to GTP. It remains bound to the aminoacyl-tRNA.EF-Tu.GTP complex up to the GTP hydrolysis stage on the ribosome. This Salmo salar (Atlantic salmon) protein is Elongation factor Ts, mitochondrial (tsfm).